The primary structure comprises 225 residues: Ribonuclease 3 (225 aa).

The RNase III domain maps to Leu-2–Gly-128. Residue Glu-43 coordinates Mg(2+). Asp-47 is an active-site residue. Asn-114 and Glu-117 together coordinate Mg(2+). Glu-117 is a catalytic residue. The DRBM domain occupies Asp-152 to Lys-220.

The protein belongs to the ribonuclease III family. As to quaternary structure, homodimer. Mg(2+) serves as cofactor.

It localises to the cytoplasm. It carries out the reaction Endonucleolytic cleavage to 5'-phosphomonoester.. In terms of biological role, digests double-stranded RNA. Involved in the processing of primary rRNA transcript to yield the immediate precursors to the large and small rRNAs (23S and 16S). Processes some mRNAs, and tRNAs when they are encoded in the rRNA operon. Processes pre-crRNA and tracrRNA of type II CRISPR loci if present in the organism. This is Ribonuclease 3 from Phytoplasma mali (strain AT).